Here is a 681-residue protein sequence, read N- to C-terminus: MFRKKKKKRPEISAPQNFQHRVHTSFDPKEGKFVGLPPQWQNILDTLRRPKPVVDPSRITRVQLQPMKTVVRGSTMPMDGYISGLLNDIQKLSVISSNTLRGRSPTSRRRAQSLGLLGDEHWATDPDMYLQSPQSERTDPHGLYLSCNGGTPAGHKQMPWPEPQSPRVLPNGLAAKAQSLGPAEFQGASQRCLQLGACLQSSPPGASPPTGTNRRGMKAAKHGSEEARPQSCLVGSATGRPGGEGSPSPKTRESSLKRRLFRSMFLSTAATAPPSSSKPGPPPQSKPNSSFRPPQKDNPPSLVAKAQSLPSDQPVGTFSPLTTSDTSSPQKSLRTAPATGQLPGRSSPAGSPRTWHAQISTSNLYLPQDPTVAKGALAGEDTGVVTHEQFKAALRMVVDQGDPRLLLDSYVKIGEGSTGIVCLAREKHSGRQVAVKMMDLRKQQRRELLFNEVVIMRDYQHFNVVEMYKSYLVGEELWVLMEFLQGGALTDIVSQVRLNEEQIATVCEAVLQALAYLHAQGVIHRDIKSDSILLTLDGRVKLSDFGFCAQISKDVPKRKSLVGTPYWMAPEVISRSLYATEVDIWSLGIMVIEMVDGEPPYFSDSPVQAMKRLRDSPPPKLKNSHKVSPVLRDFLERMLVRDPQERATAQELLDHPFLLQTGLPECLVPLIQLYRKQTSTC.

Disordered regions lie at residues 1–30 (MFRK…DPKE), 200–256 (QSSP…ESSL), and 268–355 (TAAT…PRTW). The CRIB domain maps to 12-25 (ISAPQNFQHRVHTS). Residues 26-406 (FDPKEGKFVG…VVDQGDPRLL (381 aa)) form a linker region. 2 stretches are compositionally biased toward low complexity: residues 201–212 (SSPPGASPPTGT) and 268–278 (TAATAPPSSSK). The span at 308–333 (SLPSDQPVGTFSPLTTSDTSSPQKSL) shows a compositional bias: polar residues. Positions 407–658 (LDSYVKIGEG…AQELLDHPFL (252 aa)) constitute a Protein kinase domain. ATP contacts are provided by residues 413 to 421 (IGEGSTGIV) and K436. The Proton acceptor role is filled by D526. Position 560 is a phosphoserine; by autocatalysis (S560).

Belongs to the protein kinase superfamily. STE Ser/Thr protein kinase family. STE20 subfamily. Interacts tightly with GTP-bound but not GDP-bound CDC42/p21 and RAC1. Interacts with the androgen receptor AR. Interacts with IQGAP1 and PPM1B. In terms of processing, autophosphorylated. Phosphorylated by MAP2K6/MAPKK6, leading to PAK6 activation.

The protein localises to the cytoplasm. The protein resides in the nucleus. It carries out the reaction L-seryl-[protein] + ATP = O-phospho-L-seryl-[protein] + ADP + H(+). The enzyme catalyses L-threonyl-[protein] + ATP = O-phospho-L-threonyl-[protein] + ADP + H(+). Functionally, serine/threonine protein kinase that plays a role in the regulation of gene transcription. The kinase activity is induced by various effectors including AR or MAP2K6/MAPKK6. Phosphorylates the DNA-binding domain of androgen receptor/AR and thereby inhibits AR-mediated transcription. Also inhibits ESR1-mediated transcription. May play a role in cytoskeleton regulation by interacting with IQGAP1. May protect cells from apoptosis through phosphorylation of BAD. This Pongo abelii (Sumatran orangutan) protein is Serine/threonine-protein kinase PAK 6 (PAK6).